Reading from the N-terminus, the 234-residue chain is MAENHCELLPPAPSGLGAGLGGGLCRRCSAGIGALAQRPSGVSKWVRLNVGGTYFLTTRQTLCRDPKSFLYRLCQADPDLDSDKDETGAYLIDRDPTYFGPVLNYLRHGKLVINRDLAEEGVLEEAEFYNITSLIKLVKDKIRERDSKTSQMPVKHVYRVLQCQEEELTQMVSTMSDGWKFEQLVSIGSSYNYGNEDQAEFLCVVSKELHNTPYGTTSEPSEKAKILQERGSRM.

Ala2 is modified (N-acetylalanine). The BTB domain occupies 44–146 (KWVRLNVGGT…LVKDKIRERD (103 aa)). The tract at residues 213-234 (PYGTTSEPSEKAKILQERGSRM) is disordered. Positions 220–234 (PSEKAKILQERGSRM) are enriched in basic and acidic residues.

Homopentamer. Interacts (via C-terminus) with GRASP55/GORASP2. Interacts with CUL3 and with ubiquitinated proteins. Interacts with CRY1.

It is found in the cytoplasm. The protein localises to the cytosol. Its subcellular location is the nucleus. Its function is as follows. Its interaction with CUL3 suggests that it may act as a substrate adapter in some E3 ligase complex. Does not affect the function of Kv channel Kv2.1/KCNB1, Kv1.2/KCNA2, Kv4.2/KCND2 and Kv3.4/KCNC4. The protein is BTB/POZ domain-containing protein KCTD5 (Kctd5) of Rattus norvegicus (Rat).